Reading from the N-terminus, the 137-residue chain is MLQPKKTKFRKQFKGRISGAAKGGFELNFGQFGLKCLEPERITARQIEAARRAITREMKRQGRVWIRVFPDLPVTAKPTEVRMGSGKGAPEYWAARVHPGRIMFEVDGVAEDIAREALRLGAAKLPVRTRVIQRIAD.

Belongs to the universal ribosomal protein uL16 family. Part of the 50S ribosomal subunit.

In terms of biological role, binds 23S rRNA and is also seen to make contacts with the A and possibly P site tRNAs. The polypeptide is Large ribosomal subunit protein uL16 (Methylorubrum extorquens (strain CM4 / NCIMB 13688) (Methylobacterium extorquens)).